Here is a 454-residue protein sequence, read N- to C-terminus: DNA-binding protein BIN4 (454 aa).

3 disordered regions span residues 24-53 (LLSL…DDGD), 103-249 (AGKE…DKDT), and 380-454 (TFES…KAKK). Over residues 112 to 123 (DCEKLSSKHKDA) the composition is skewed to basic and acidic residues. Residues 132–150 (LVSSDSEPSSPIKQEVTVS) are compositionally biased toward polar residues. Residues 229-249 (TPKEENCAQEILKTEDKDKDT) show a composition bias toward basic and acidic residues. Over residues 438–454 (PAKKARNSAPKKPKAKK) the composition is skewed to basic residues.

In terms of assembly, interacts with TOP6A, RHL1 and itself, but not with TOP6B. In terms of tissue distribution, expressed in expanding cotyledons, vascular cells, elongating root cells, developing leaf trichomes, root and apical meristems and lateral root primordia.

Its subcellular location is the nucleus. Its function is as follows. Component of the DNA topoisomerase VI complex. Binds to DNA. Required for chromatin organization and progression of endoreduplication cycles. The loss of BIN4 activates the ATM- and ATR-dependent DNA damage responses in postmitotic cells and induces the ectopic expression of the mitotic G2/M-specific cyclin B1;1 gene in non-dividing cells. The sequence is that of DNA-binding protein BIN4 (BIN4) from Arabidopsis thaliana (Mouse-ear cress).